A 1643-amino-acid polypeptide reads, in one-letter code: MSLFTALNSTPHDALLEAEEHSRELQVEESFRVFQSALFHLKAKRFDDAEAKFEQLFNIEVLKPDHWGLYRYSSPTLDLLRYLAYRNRGVFYYQYVREHAEELDKDDIVDYILKVVENLLQALQHSDGDAAVTGLLLQVFRGFKSKRLQRWILEYELTKQPEEMLLLGRGRALLPDTRGLVEEYRRVLRDVRSEPVTEFAARVLTLVKTDSLEVQPLPPVLDKIEQLKDEDDAMMKQLAEYEVNLEELSWECIAESFRSLVPKYKYTNFFSKAPDPYSEAGDPIECIKFVHNDKPIEQEVMEQLSVQNEREPFAATQAATEAPTLEKEGSENGGRTESKRDSELPSDSQRPAQRSSKRFKERSTETNEAELLRPHQDFAALFYSCTGILEVRLEIELSHLNPEAIPSTYPAYMPMLDFYECLNSWTSKHTEFLNQSETKGTSKNKGKGEDSFQLTSLLRSSMFTEENRPTISLTELPYKEVAEFISTVNSNRLHFHAVRLLLLQVLLTVRPDGSCLITDTFWSPILYDTIESFVLSLESNIYDLVYSQSEKYKGLGLSFCEVLMNSLGGIYTEIHAKKISGGKYGELEAQKNKLEKKIDRWVLLLDQLVFEGKLKFRYLWSKFCYLQCISDVTDDRIIHSLDYITHELRNSSMDIDISYANYEHTPRLNMETVQSQLSKIKMMRKFTMVNQMDVDRNDSSNEDQIEALSRVLVGTSLLDTPEDRSMSEFVNQAPFLLKIKLWRIVLHHYLAVKDQSNFQICYFKVLHVLYERLCSKEYSDQSQLQRQQTLLSTLSLMRSFTSLFIELLSGANEWVINDTSQASEYFKLLIDVFILLYPLTYFETLSQKSATTVSFFKKAAKSSVILKDMFVDISCLLVLYFTGACTQKEVVNGVEVATEFIHALHLLIGGFTFCDAANGNFLNLAEHFFCSVEGSSSFIPLKQILLCKYRLSLGGDANSFEDHGAKPQVLEMHNAVRLAKYLIRFEYQNKNPYLISTNRSNLKQVIENVIDVIGKIPYAENHILARNVYYFEQYLEAPVTAKIIQEALQGCISIELTKPRDNLQEIVDLGLYYISGVQLLNLYKVRKKTLQARPSELDSIIETLKADILYKTNRFETWFLLGKCYSYVVEDDLIWTSDRLVVASKKATTASIQRKAILCYLMALNLCQLSVDDPSLSEAQKMENAFIKREIYEVLALELLNAYFKPMEGLPFQRDIAPALVLTETGELVEPKNSPQPSISSANIYRATLLVFTNADEMYKDSQDALQNWLNPHYIANLRFKHEREDFITDGFDIIIRACNLAMKASTSNDNIIEPHYSLVIKCYKSVKHGWLRPEDALKHLLNDNSFLAQEANFYSHNPENSVQDFYRKIITLLRRLLALDKRKWHHRPTYRIARILFDDFNDVDGAIQEMGVLMALKSVNKNLVNIWKPEYERPGKHFVYTYQYVMFYLKLLSHKNDYISLGHAARKMRRFGSGMVNGSLATDKAVEMFINGARAALGINEKEHAELLLPTLNYQAFNRYSDELIASFNKENYSYEVLESLAISYQLKKGSSGIAFDGVCLSIYFKYLYLPWVEEHEAAEATQSMVKFVEINKNVNPTENETASPQPAAEPQKSTTKQVSSRKRVSKKDAFDKISQIVDKIT.

Disordered stretches follow at residues glutamate 311–glutamate 370 and proline 1598–lysine 1629. A compositionally biased stretch (basic and acidic residues) spans threonine 324–glutamate 343. Over residues proline 345 to arginine 354 the composition is skewed to polar residues. The span at glutamate 361–glutamate 370 shows a compositional bias: basic and acidic residues.

Belongs to the HIR3 family.

Its subcellular location is the nucleus. Functionally, has a role in a nucleosome assembly pathway that is required for the integrity of heterochromatin and proper chromosome segregation. The polypeptide is Histone transcription regulator 3 homolog (HIR3) (Eremothecium gossypii (strain ATCC 10895 / CBS 109.51 / FGSC 9923 / NRRL Y-1056) (Yeast)).